We begin with the raw amino-acid sequence, 126 residues long: Small ribosomal subunit protein uS13 (126 aa).

Residues 92-126 (HRRGLPVRGQRTKTNARTRKGPRKTVAGKKKATRK) form a disordered region.

The protein belongs to the universal ribosomal protein uS13 family. In terms of assembly, part of the 30S ribosomal subunit. Forms a loose heterodimer with protein S19. Forms two bridges to the 50S subunit in the 70S ribosome.

Functionally, located at the top of the head of the 30S subunit, it contacts several helices of the 16S rRNA. In the 70S ribosome it contacts the 23S rRNA (bridge B1a) and protein L5 of the 50S subunit (bridge B1b), connecting the 2 subunits; these bridges are implicated in subunit movement. Contacts the tRNAs in the A and P-sites. The protein is Small ribosomal subunit protein uS13 of Deinococcus geothermalis (strain DSM 11300 / CIP 105573 / AG-3a).